Reading from the N-terminus, the 84-residue chain is GTP cyclohydrolase 1 feedback regulatory protein (84 aa).

Belongs to the GFRP family. In terms of assembly, homopentamer. Forms a complex with GCH1 where a GCH1 homodecamer is sandwiched by two GFRP homopentamers.

Its subcellular location is the nucleus. It localises to the nucleus membrane. The protein resides in the cytoplasm. It is found in the cytosol. Mediates tetrahydrobiopterin inhibition of GTP cyclohydrolase 1. The protein is GTP cyclohydrolase 1 feedback regulatory protein (gchfr) of Xenopus tropicalis (Western clawed frog).